The primary structure comprises 162 residues: Probable chemoreceptor glutamine deamidase CheD 2 (162 aa).

Belongs to the CheD family.

It catalyses the reaction L-glutaminyl-[protein] + H2O = L-glutamyl-[protein] + NH4(+). Functionally, probably deamidates glutamine residues to glutamate on methyl-accepting chemotaxis receptors (MCPs), playing an important role in chemotaxis. The polypeptide is Probable chemoreceptor glutamine deamidase CheD 2 (Geobacter metallireducens (strain ATCC 53774 / DSM 7210 / GS-15)).